The primary structure comprises 561 residues: Urocanate hydratase (561 aa).

Residues 52-53 (GG), Q130, 176-178 (GMG), E196, R201, 242-243 (NA), 263-267 (QTSAH), 273-274 (YL), and Y322 each bind NAD(+). C410 is a catalytic residue. G492 is a binding site for NAD(+).

It belongs to the urocanase family. NAD(+) is required as a cofactor.

It is found in the cytoplasm. The catalysed reaction is 4-imidazolone-5-propanoate = trans-urocanate + H2O. It functions in the pathway amino-acid degradation; L-histidine degradation into L-glutamate; N-formimidoyl-L-glutamate from L-histidine: step 2/3. Its function is as follows. Catalyzes the conversion of urocanate to 4-imidazolone-5-propionate. This is Urocanate hydratase from Salmonella agona (strain SL483).